The primary structure comprises 77 residues: Dermatoxin-DA1 (77 aa).

The N-terminal stretch at Met1–Cys22 is a signal peptide. Positions Glu23–Glu42 are excised as a propeptide. Residue Lys76 is modified to Lysine amide.

This sequence belongs to the frog skin active peptide (FSAP) family. Dermatoxin subfamily. In terms of tissue distribution, expressed by the skin glands.

The protein localises to the secreted. In terms of biological role, possesses a potent antimicrobial activity against Gram-positive and Gram-negative bacteria. Probably acts by disturbing membrane functions with its amphipathic structure. The polypeptide is Dermatoxin-DA1 (Agalychnis dacnicolor (Giant Mexican leaf frog)).